The chain runs to 171 residues: Large ribosomal subunit protein uL10 (171 aa).

The protein belongs to the universal ribosomal protein uL10 family. Part of the ribosomal stalk of the 50S ribosomal subunit. The N-terminus interacts with L11 and the large rRNA to form the base of the stalk. The C-terminus forms an elongated spine to which L12 dimers bind in a sequential fashion forming a multimeric L10(L12)X complex.

In terms of biological role, forms part of the ribosomal stalk, playing a central role in the interaction of the ribosome with GTP-bound translation factors. This Corynebacterium jeikeium (strain K411) protein is Large ribosomal subunit protein uL10.